Consider the following 335-residue polypeptide: NmrA-like family domain-containing oxidoreductase ptmS (335 aa).

Residues glycine 12 to glutamine 17, arginine 39 to serine 43, aspartate 60 to glycine 61, isoleucine 81 to phenylalanine 88, lysine 139, and phenylalanine 163 to asparagine 166 contribute to the NADP(+) site. The interaction with ASS1 stretch occupies residues glycine 161–serine 206.

This sequence belongs to the NmrA-type oxidoreductase family.

The protein operates within secondary metabolite biosynthesis. Its function is as follows. NmrA-like family domain-containing oxidoreductase; part of the gene cluster that mediates the biosynthesis of the indole diterpenes penitrems. The geranylgeranyl diphosphate (GGPP) synthase ptmG catalyzes the first step in penitrem biosynthesis via conversion of farnesyl pyrophosphate and isopentyl pyrophosphate into geranylgeranyl pyrophosphate (GGPP). Condensation of indole-3-glycerol phosphate with GGPP by the prenyl transferase ptmC then forms 3-geranylgeranylindole (3-GGI). Epoxidation by the FAD-dependent monooxygenase ptmM leads to a epoxidized-GGI that is substrate of the terpene cyclase ptmB for cyclization to yield paspaline. Paspaline is subsequently converted to 13-desoxypaxilline by the cytochrome P450 monooxygenase ptmP, the latter being then converted to paxilline by the cytochrome P450 monooxygenase ptmQ. Paxilline is converted to beta-paxitriol via C-10 ketoreduction by the short-chain dehydrogenase ptmH which can be monoprenylated at the C-20 by the indole diterpene prenyltransferase ptmD. A two-step elimination (acetylation and elimination) process performed by the O-acetyltransferase ptmV and ptmI leads to the production of the prenylated form of penijanthine. The FAD-linked oxidoreductase ptmO then converts the prenylated form of penijanthine into PC-M5 which is in turn transformed into PC-M4 by the aromatic dimethylallyltransferase ptmE. Five sequential oxidative transformations performed by the cytochrome P450 monooxygenases ptmK, ptmU, ptmL, ptmN and ptmJ yield the various penitrem compounds. PtmK, ptmU and ptmM are involved in the formation of the key bicyclic ring of penitrem C via the formation of the intermediates secopenitrem D and penitrem D. PtmL catalyzes the epoxidation of penitrem D and C to yield penitrem B and F, respectively. PtmJ catalyzes the last benzylic hydroxylation to convert penitrem B to prenitrem E and penitrem F to penitrem A. The protein is NmrA-like family domain-containing oxidoreductase ptmS of Penicillium ochrochloron.